Here is an 86-residue protein sequence, read N- to C-terminus: Large ribosomal subunit protein bL27 (86 aa).

The disordered stretch occupies residues 1 to 24 (MAHKKAGGSSRNGRDSEGRRLGVK).

The protein belongs to the bacterial ribosomal protein bL27 family.

This Magnetococcus marinus (strain ATCC BAA-1437 / JCM 17883 / MC-1) protein is Large ribosomal subunit protein bL27.